Reading from the N-terminus, the 96-residue chain is Cathelin (96 aa).

Pyrrolidone carboxylic acid is present on Gln-1. Residues 31 to 50 (DQPPKADEDPGTPKPVSFTV) are disordered. Intrachain disulfides connect Cys-55–Cys-66 and Cys-73–Cys-90.

It belongs to the cathelicidin family.

Its subcellular location is the secreted. Its function is as follows. Probably a microbicidal peptide. The polypeptide is Cathelin (Sus scrofa (Pig)).